A 407-amino-acid polypeptide reads, in one-letter code: Phosphoglycerate kinase (407 aa).

Residues aspartate 27–asparagine 29, arginine 43, histidine 66–arginine 69, arginine 125, and arginine 165 contribute to the substrate site. ATP contacts are provided by residues lysine 215, glycine 303, glutamate 334, and glycine 363–serine 366.

This sequence belongs to the phosphoglycerate kinase family. In terms of assembly, monomer.

The protein resides in the cytoplasm. It catalyses the reaction (2R)-3-phosphoglycerate + ATP = (2R)-3-phospho-glyceroyl phosphate + ADP. It functions in the pathway carbohydrate degradation; glycolysis; pyruvate from D-glyceraldehyde 3-phosphate: step 2/5. In Mycobacterium sp. (strain JLS), this protein is Phosphoglycerate kinase.